Reading from the N-terminus, the 374-residue chain is tRNA-specific 2-thiouridylase MnmA (374 aa).

ATP is bound by residues 17 to 24 and methionine 43; that span reads GMSGGVDS. The interaction with target base in tRNA stretch occupies residues 103-105; sequence NPD. The active-site Nucleophile is the cysteine 108. A disulfide bond links cysteine 108 and cysteine 204. Glycine 132 lines the ATP pocket. The interval 154-156 is interaction with tRNA; it reads KDQ. Cysteine 204 functions as the Cysteine persulfide intermediate in the catalytic mechanism. The segment at 316-317 is interaction with tRNA; it reads RY.

This sequence belongs to the MnmA/TRMU family.

The protein resides in the cytoplasm. It carries out the reaction S-sulfanyl-L-cysteinyl-[protein] + uridine(34) in tRNA + AH2 + ATP = 2-thiouridine(34) in tRNA + L-cysteinyl-[protein] + A + AMP + diphosphate + H(+). In terms of biological role, catalyzes the 2-thiolation of uridine at the wobble position (U34) of tRNA, leading to the formation of s(2)U34. The chain is tRNA-specific 2-thiouridylase MnmA from Pseudomonas fluorescens (strain Pf0-1).